The primary structure comprises 530 residues: Chitin synthase 1 (530 aa).

A glycan (N-linked (GlcNAc...) asparagine) is linked at N17. The disordered stretch occupies residues 22–94; it reads QESSSNLIQQ…QANNNRKVTR (73 aa). The segment covering 24–56 has biased composition (polar residues); the sequence is SSSNLIQQQQPGTNYARNQQTLSSLRSQKQQAE. N118, N310, and N474 each carry an N-linked (GlcNAc...) asparagine glycan. The next 2 membrane-spanning stretches (helical) occupy residues 477–497 and 508–528; these read FFAG…GHGF and IYNV…LSFL.

This sequence belongs to the chitin synthase family. Class II subfamily.

The protein localises to the cell membrane. It carries out the reaction [(1-&gt;4)-N-acetyl-beta-D-glucosaminyl](n) + UDP-N-acetyl-alpha-D-glucosamine = [(1-&gt;4)-N-acetyl-beta-D-glucosaminyl](n+1) + UDP + H(+). In terms of biological role, polymerizes chitin, a structural polymer of the cell wall and septum, by transferring the sugar moiety of UDP-GlcNAc to the non-reducing end of the growing chitin polymer. In Rhizopus delemar (strain RA 99-880 / ATCC MYA-4621 / FGSC 9543 / NRRL 43880) (Mucormycosis agent), this protein is Chitin synthase 1.